The chain runs to 266 residues: N-formylglutamate deformylase (266 aa).

Belongs to the N-formylglutamate deformylase family. As to quaternary structure, monomer.

It catalyses the reaction N-formyl-L-glutamate + H2O = formate + L-glutamate. Its pathway is amino-acid degradation; L-histidine degradation into L-glutamate; L-glutamate from N-formimidoyl-L-glutamate (deiminase route): step 2/2. Functionally, catalyzes the hydrolysis of N-formyl-L-glutamate to formate and L-glutamate. Shows weak activity with N-formyl-L-glutamine. The polypeptide is N-formylglutamate deformylase (Pseudomonas aeruginosa (strain ATCC 15692 / DSM 22644 / CIP 104116 / JCM 14847 / LMG 12228 / 1C / PRS 101 / PAO1)).